The following is a 338-amino-acid chain: L-serine dehydratase (338 aa).

N6-(pyridoxal phosphate)lysine is present on lysine 39.

Belongs to the serine/threonine dehydratase family. It depends on pyridoxal 5'-phosphate as a cofactor.

It localises to the cytoplasm. It catalyses the reaction L-serine = pyruvate + NH4(+). The protein operates within carbohydrate biosynthesis; gluconeogenesis. In Saccharomyces cerevisiae (strain AWRI1631) (Baker's yeast), this protein is L-serine dehydratase (SDL1).